The chain runs to 205 residues: Transmembrane emp24 domain-containing protein A (205 aa).

The first 24 residues, 1 to 24, serve as a signal peptide directing secretion; sequence MMNNKLLLLVIALLCIASNSIVES. At 25-172 the chain is on the lumenal side; that stretch reads FSFKVSAKVE…RNTAESTNSR (148 aa). A GOLD domain is found at 34–116; that stretch reads EECIYEEIGV…DKTVSFILSV (83 aa). The helical transmembrane segment at 173 to 193 threads the bilayer; sequence VLWWSVFEAFVLIALSIWQIY. Over 194–205 the chain is Cytoplasmic; that stretch reads YLRRFFEVKRAV.

This sequence belongs to the EMP24/GP25L family.

It is found in the cytoplasmic vesicle membrane. Its function is as follows. Could have a role in the budding of coatomer-coated and other species of coated vesicles. In Dictyostelium discoideum (Social amoeba), this protein is Transmembrane emp24 domain-containing protein A (empA).